A 423-amino-acid polypeptide reads, in one-letter code: GPI mannosyltransferase 2 (423 aa).

A run of 9 helical transmembrane segments spans residues 7–27, 102–122, 128–148, 151–171, 191–211, 228–248, 298–318, 333–353, and 400–420; these read LTLIFIAACLSRILHLTILSG, VILGGTIVANVAFVAATLVLY, IFNPTFAFLTSLLYLLPPTAT, APYTEPIYSLLTFSGIYLLSI, TGIFNSITLMCFAVFGDAHIF, FLSAILVVAPFFMFQHYTETV, LAMPILFSSLAGVVKFFSHLV, PPPILFELYSVHVLTMALLLF, and YWIGWTVVWGAVAAVLWAGHY.

The protein belongs to the PIGV family.

Its subcellular location is the endoplasmic reticulum membrane. Its pathway is glycolipid biosynthesis; glycosylphosphatidylinositol-anchor biosynthesis. Its function is as follows. Mannosyltransferase involved in glycosylphosphatidylinositol-anchor biosynthesis. Transfers the second mannose to the glycosylphosphatidylinositol during GPI precursor assembly. The chain is GPI mannosyltransferase 2 (GPI18) from Cryptococcus neoformans var. neoformans serotype D (strain B-3501A) (Filobasidiella neoformans).